Here is a 777-residue protein sequence, read N- to C-terminus: Serine/threonine-protein kinase PLK4 (777 aa).

The 255-residue stretch at 14 to 268 folds into the Protein kinase domain; that stretch reads YEVQHLLGKG…LEQVLRHPFL (255 aa). Residues 20-28 and lysine 43 each bind ATP; that span reads LGKGGFASV. Aspartate 139 (proton acceptor) is an active-site residue. Residues 371 to 381 show a composition bias toward polar residues; it reads TNNLAPFTSDS. Residues 371–390 form a disordered region; the sequence is TNNLAPFTSDSDMIPSPVGE. Positions 390–507 constitute a Cryptic POLO box 1 (CPB1) domain; that stretch reads EKRLLMPPLE…ARFVGLVKSK (118 aa). In terms of domain architecture, Cryptic POLO box 2 (CPB2) spans 508–611; the sequence is TPKITFFSSL…GRRPAADMHA (104 aa). The 80-residue stretch at 669–748 folds into the POLO box domain; the sequence is PIKRITVPEI…MPQLQMKLKC (80 aa).

Belongs to the protein kinase superfamily. Ser/Thr protein kinase family. CDC5/Polo subfamily. In terms of assembly, homodimer. In terms of processing, ubiquitinated by the SCF(Slimb) ubiquitin ligase complex; leading to its degradation by the proteasome during interphase and regulating centriole number and ensuring the block to centriole reduplication.

The protein resides in the cytoplasm. It localises to the cytoskeleton. Its subcellular location is the microtubule organizing center. It is found in the centrosome. The protein localises to the centriole. The catalysed reaction is L-seryl-[protein] + ATP = O-phospho-L-seryl-[protein] + ADP + H(+). It catalyses the reaction L-threonyl-[protein] + ATP = O-phospho-L-threonyl-[protein] + ADP + H(+). Its function is as follows. Serine/threonine-protein kinase that plays a central role in centriole duplication. Able to trigger procentriole formation on the surface of the mother centriole cylinder, using mother centriole as a platform, leading to the recruitment of centriole biogenesis proteins such as sas-6. When overexpressed, it is able to induce centrosome amplification through the simultaneous generation of multiple procentrioles adjoining each parental centriole during S phase. Centrosome amplification following overexpression can initiate tumorigenesis, highlighting the importance of centrosome regulation in cancers. The protein is Serine/threonine-protein kinase PLK4 (SAK) of Drosophila pseudoobscura pseudoobscura (Fruit fly).